The following is a 136-amino-acid chain: Large ribosomal subunit protein bL17 (136 aa).

It belongs to the bacterial ribosomal protein bL17 family. As to quaternary structure, part of the 50S ribosomal subunit. Contacts protein L32.

This is Large ribosomal subunit protein bL17 from Rickettsia canadensis (strain McKiel).